Here is a 359-residue protein sequence, read N- to C-terminus: F-box protein At1g10895 (359 aa).

Positions 2 to 48 constitute an F-box domain; sequence TTMSDLDEIMVAEILCRTPMTCLKTVRSVCKKWNALSKKWFFFGKAK.

The sequence is that of F-box protein At1g10895 from Arabidopsis thaliana (Mouse-ear cress).